The primary structure comprises 305 residues: tRNA dimethylallyltransferase (305 aa).

14 to 21 is a binding site for ATP; the sequence is GPTTSGKT. Residue 16–21 coordinates substrate; it reads TTSGKT. Interaction with substrate tRNA stretches follow at residues 39–42, 163–167, and 243–248; these read DSAL, QRITR, and RCVGYR.

It belongs to the IPP transferase family. Monomer. Mg(2+) is required as a cofactor.

The catalysed reaction is adenosine(37) in tRNA + dimethylallyl diphosphate = N(6)-dimethylallyladenosine(37) in tRNA + diphosphate. Functionally, catalyzes the transfer of a dimethylallyl group onto the adenine at position 37 in tRNAs that read codons beginning with uridine, leading to the formation of N6-(dimethylallyl)adenosine (i(6)A). This is tRNA dimethylallyltransferase from Ruthia magnifica subsp. Calyptogena magnifica.